A 653-amino-acid polypeptide reads, in one-letter code: MYLGFWLSRLCRGLSRPIGKTMRPIWGSLSRNLALSSQRIPEFSSFVARTNTCGELRSSHLGQEVTLCGWIQYRRQNTFLVLRDCHGLVQILIPQDESAASVRRILCEAPVESVVRVSGTVISRPPGQENPKMPTGEIEIKVKTAELLNACKKLPFEIKDFVKKTEALRLQYRYLDLRSFQMQYNLRLRSQMVMKMREYLCNLHGFVDIETPTLFKRTPGGAKEFLVPSREPGKFYSLPQSPQQFKQLLMVGGLDRYFQVARCYRDEGSRPDRQPEFTQIDIEMSFVEQTGIQRLVEGLLQYSWPGDKDPLVTPFPSMTFAEALATYGTDKPDTRFGMKIVDVSDVFRNTELRFLQDALAKPQGTVKAICVHDGAKYLRKEDIEFIRKFAVHHFSQEVLPIFLNAKKNWSSPFAKFIMEEERLELARSMEIQEEDIVLLTAGEHEKACSLLGKLRLECADLLEMRGAVLRDPAVFSFLWVVDFPLFLAKEESPTELESAHHPFTAPNSSDIHLLYTEPEKVRGQHYDLVLNGNEIGGGSVRIHDAQLQRYILETLLKEDVKLLSHLLQALDYGAPPHGGIALGLDRLVCLVTGAPSIRDVIAFPKSYRGQDLMSNAPDSVSPEELKPYHIHVLWPADSEEESASATPSKHLSS.

The N-terminal 46 residues, 1 to 46 (MYLGFWLSRLCRGLSRPIGKTMRPIWGSLSRNLALSSQRIPEFSSF), are a transit peptide targeting the mitochondrion. Threonine 218 is modified (phosphothreonine). Residue serine 241 is modified to Phosphoserine. The tract at residues 243-246 (QQFK) is aspartate. Arginine 265 contacts L-aspartate. Residues 265–267 (RDE) and glutamate 534 contribute to the ATP site. Residue arginine 541 participates in L-aspartate binding. 583-586 (GLDR) contributes to the ATP binding site.

This sequence belongs to the class-II aminoacyl-tRNA synthetase family. Type 1 subfamily. Homodimer.

It is found in the mitochondrion matrix. Its subcellular location is the mitochondrion membrane. It catalyses the reaction tRNA(Asp) + L-aspartate + ATP = L-aspartyl-tRNA(Asp) + AMP + diphosphate. Its function is as follows. Catalyzes the attachment of aspartate to tRNA(Asp) in a two-step reaction: aspartate is first activated by ATP to form Asp-AMP and then transferred to the acceptor end of tRNA(Asp). The chain is Aspartate--tRNA ligase, mitochondrial (Dars2) from Mus musculus (Mouse).